Reading from the N-terminus, the 1088-residue chain is Extended synaptotagmin-1 (1088 aa).

An N-acetylmethionine modification is found at Met1. Residues 1–30 lie on the Cytoplasmic side of the membrane; it reads MERSPEEGAGPEPSGQSPATDSTRERDGGS. The interval 1-38 is disordered; sequence MERSPEEGAGPEPSGQSPATDSTRERDGGSGVPPAGPG. A helical transmembrane segment spans residues 31–51; it reads GVPPAGPGAASEALAVLTSFG. At 52-54 the chain is on the lumenal side; it reads RRL. The helical transmembrane segment at 55–75 threads the bilayer; the sequence is LVLVPVYLAGAAGLSVGFVLF. Residues 76–1088 are Cytoplasmic-facing; sequence GLALYLGWRR…LIDDRDKGGS (1013 aa). Positions 127–305 constitute an SMP-LTD domain; the sequence is DVEKAEWLNK…LPNRLLVPLV (179 aa). 4 C2 domains span residues 304–425, 446–572, 618–740, and 771–888; these read LVPD…DNWY, DAEK…QLSS, DAPP…DEWL, and QVNS…ALSG. Ser316 carries the phosphoserine; by CDK5 modification. Ca(2+)-binding residues include Lys336, Asp337, Asp349, Asp396, Asp398, Asp400, Asp402, and Asp403. The interval 599–630 is disordered; it reads TEPGAQDWDSESPETGSSVDAPPRPYHTTPNS. N6-acetyllysine is present on Lys806. Residue Ser809 is modified to Phosphoserine. The disordered stretch occupies residues 911–930; it reads HSHSSSSLNEEPEVLGDPTH. Phosphoserine occurs at positions 933 and 947. Positions 955–1077 constitute a C2 5 domain; it reads PLGQVKLTVW…DLSQGAAQWY (123 aa). Tyr993 bears the Phosphotyrosine mark. The interval 1002–1009 is required for phosphatidylinositol 4,5-bisphosphate-dependent location at the cell membrane; sequence KNRGTKRK.

It belongs to the extended synaptotagmin family. As to quaternary structure, interacts with ESYT2 and ESYT3. Interacts with ADGRD1; inhibiting the G-protein-coupled receptor activity of ADGRD1. Interaction with ADGRD1 is abolished when cytosolic calcium increases, relieving ADGRD1 G-protein-coupled receptor activity. Interacts (phosphorylated form) with SLC2A4. Post-translationally, phosphorylated on Ser residues in insulin-treated adipocytes (in vitro); this promotes interaction with SLC2A4. Ubiquitously expressed with a higher expression in spleen and white adipose tissue.

It localises to the endoplasmic reticulum membrane. Its subcellular location is the cell membrane. Functionally, binds calcium (via the C2 domains) and translocates to sites of contact between the endoplasmic reticulum and the cell membrane in response to increased cytosolic calcium levels. Helps tether the endoplasmic reticulum to the cell membrane and promotes the formation of appositions between the endoplasmic reticulum and the cell membrane. Acts as an inhibitor of ADGRD1 G-protein-coupled receptor activity in absence of cytosolic calcium. Binds glycerophospholipids in a barrel-like domain and may play a role in cellular lipid transport. The protein is Extended synaptotagmin-1 (Esyt1) of Rattus norvegicus (Rat).